Consider the following 391-residue polypeptide: MDATANPKAGQLTIVGSGIASINHMTLQAVACIETADVVCYVVADGATEAFIRKKNENCIDLYPLYSETKERTDTYIQMAEFMLNHVRAGKNVVGVFYGHPGVFVCPTHRAIYIARNEGYRAVMLPGLSAEDCLYADLGIDPSTVGCITYEATDMLVYNRPLNSSSHLVLYQVGIVGKADFKFAYDPKENHHFGKLIDRLELEYGPDHTVVHYIAPIFPTEEPVMERFTIGQLKLKENSDKIATISTFYLPPKAPSAKVSLNREFLRSLNIADSRDPMTPFPWNPTAAPYGEREKKVILELESHVPPPGYRPLKKNSGLAQALEKLSLDTRALAAWKTDRKAYADSVSGLTDDERDALASGKHAQLSGALKEGGVPMNHAQLTFFFIISNL.

Positions 1 to 253 (MDATANPKAG…TISTFYLPPK (253 aa)) are methyltransferase domain. Active-site residues include Arg-72, Tyr-76, and Tyr-98. S-adenosyl-L-methionine is bound by residues Tyr-98, His-100, Val-103, Ala-130, Gln-172, Ala-215, Ser-246, and Thr-247. The clasp domain stretch occupies residues 254 to 373 (APSAKVSLNR…AQLSGALKEG (120 aa)). The interval 374–376 (GVP) is precursor leader. Leu-382 is modified (N-methylleucine). Residues Phe-385 and Phe-386 each carry the N-methylphenylalanine modification. N-methylisoleucine occurs at positions 387 and 388.

In the N-terminal section; belongs to the precorrin methyltransferase family. Homodimer. Post-translationally, cmaMA automethylates at Leu-382, Phe-385, Phe-386, Ile-387 and Ile-388 before being processed by the prolyloligopeptidase ledP which likely forms a peptidyl ester upon removal of the follower propeptide, which then undergoes macrocyclization with the N-terminus of the modified core peptide. Peptide backbone alpha-N-methylations change the physicochemical properties of amide bonds to provide structural constraints and other favorable characteristics including biological membrane permeability to peptides.

The protein operates within secondary metabolite biosynthesis. Its function is as follows. Fusion protein of the methyltransferase cmaM and a type I borosin core peptide; part of the gene cluster that mediates the biosynthesis of a type I borosin, a highly methylated cyclic peptide with potent biological activities. Type I borosins derive from the C-terminus of the fusion protein, and it is the same protein that methylates its own C-terminus using S-adenosyl methionine (SAM). The C-terminus is subsequently cleaved off and macrocyclized by a prolyloligopeptidase to give the final product. In Coprinopsis marcescibilis (Agaric fungus), this protein is Methyltransferase/ribosomally synthesized type I borosin cyclic peptide precursor cmaMA.